Consider the following 94-residue polypeptide: Co-chaperonin GroES (94 aa).

Belongs to the GroES chaperonin family. In terms of assembly, heptamer of 7 subunits arranged in a ring. Interacts with the chaperonin GroEL.

It localises to the cytoplasm. Its function is as follows. Together with the chaperonin GroEL, plays an essential role in assisting protein folding. The GroEL-GroES system forms a nano-cage that allows encapsulation of the non-native substrate proteins and provides a physical environment optimized to promote and accelerate protein folding. GroES binds to the apical surface of the GroEL ring, thereby capping the opening of the GroEL channel. In Bacillus subtilis (strain 168), this protein is Co-chaperonin GroES.